A 162-amino-acid chain; its full sequence is ATP synthase subunit delta, mitochondrial (162 aa).

A mitochondrion-targeting transit peptide spans 1–25; sequence MSSLRLLASAARRATTHVAYTRRGY.

The protein belongs to the ATPase epsilon chain family. As to quaternary structure, F-type ATPases have 2 components, CF(1) - the catalytic core - and CF(0) - the membrane proton channel. CF(1) has five subunits: alpha(3), beta(3), gamma(1), delta(1), epsilon(1). CF(0) has three main subunits: a, b and c.

The protein resides in the mitochondrion. The protein localises to the mitochondrion inner membrane. Its function is as follows. Mitochondrial membrane ATP synthase (F(1)F(0) ATP synthase or Complex V) produces ATP from ADP in the presence of a proton gradient across the membrane which is generated by electron transport complexes of the respiratory chain. F-type ATPases consist of two structural domains, F(1) - containing the extramembraneous catalytic core, and F(0) - containing the membrane proton channel, linked together by a central stalk and a peripheral stalk. During catalysis, ATP turnover in the catalytic domain of F(1) is coupled via a rotary mechanism of the central stalk subunits to proton translocation. Part of the complex F(1) domain and of the central stalk which is part of the complex rotary element. Rotation of the central stalk against the surrounding alpha(3)beta(3) subunits leads to hydrolysis of ATP in three separate catalytic sites on the beta subunits. This is ATP synthase subunit delta, mitochondrial (atpD) from Agaricus bisporus (White button mushroom).